Reading from the N-terminus, the 136-residue chain is Small ribosomal subunit protein uS19 (136 aa).

The segment at 117 to 136 (VQHGDPGMGATRSSMFVPLK) is disordered.

Belongs to the universal ribosomal protein uS19 family.

In terms of biological role, protein S19 forms a complex with S13 that binds strongly to the 16S ribosomal RNA. In Methanobrevibacter smithii (strain ATCC 35061 / DSM 861 / OCM 144 / PS), this protein is Small ribosomal subunit protein uS19.